A 240-amino-acid polypeptide reads, in one-letter code: Ribonuclease PH (240 aa).

Phosphate-binding positions include R87 and 125-127 (GTR).

This sequence belongs to the RNase PH family. In terms of assembly, homohexameric ring arranged as a trimer of dimers.

It catalyses the reaction tRNA(n+1) + phosphate = tRNA(n) + a ribonucleoside 5'-diphosphate. Phosphorolytic 3'-5' exoribonuclease that plays an important role in tRNA 3'-end maturation. Removes nucleotide residues following the 3'-CCA terminus of tRNAs; can also add nucleotides to the ends of RNA molecules by using nucleoside diphosphates as substrates, but this may not be physiologically important. Probably plays a role in initiation of 16S rRNA degradation (leading to ribosome degradation) during starvation. This is Ribonuclease PH from Pseudomonas putida (strain GB-1).